Here is a 958-residue protein sequence, read N- to C-terminus: Collagen alpha-1(I) chain (958 aa).

The tract at residues 1 to 958 (GPMGPSGPRG…PGPPGPPGPP (958 aa)) is disordered. The span at 50–64 (NGDDGEAGKPGRPGE) shows a compositional bias: basic and acidic residues. S92 is modified (phosphoserine). Low complexity-rich tracts occupy residues 100–116 (DAGP…PGEN) and 139–152 (PAGA…TGAA). Residues 154-166 (PPGPTGPAGPPGF) show a composition bias toward pro residues. A compositionally biased stretch (low complexity) spans 216–232 (APGIAGAPGFPGARGPS). The segment covering 294–303 (GERGGPGSRG) has biased composition (gly residues). Composition is skewed to low complexity over residues 304 to 335 (FPGS…PGEA), 347 to 373 (KGIT…QDGR), 382 to 401 (ARGQ…AGEP), 557 to 571 (SGPS…ARGA), 584 to 614 (AGFA…AGPA), 640 to 656 (SAGP…AGRV), 685 to 694 (ETGPAGRPGE), and 704 to 728 (AGEK…QGIA). Residue S560 is modified to Phosphoserine. Pro residues-rich tracts occupy residues 769–779 (PPGPVGPPGIA) and 808–823 (AGPP…PGPV). Over residues 859–873 (RGDKGETGEQGDRGI) the composition is skewed to basic and acidic residues. Residues 892–925 (PGEQGPSGASGPAGPRGPPGSAGAPGKDGINGIP) show a composition bias toward low complexity. A compositionally biased stretch (pro residues) spans 943-958 (VGPPGPPGPPGPPGPP).

It belongs to the fibrillar collagen family. As to quaternary structure, trimers of one alpha 2(I) and two alpha 1(I) chains. Prolines at the third position of the tripeptide repeating unit (G-X-Y) are hydroxylated in some or all of the chains. In terms of tissue distribution, forms the fibrils of tendon, ligaments and bones. In bones, the fibrils are mineralized with calcium hydroxyapatite.

It localises to the secreted. The protein localises to the extracellular space. The protein resides in the extracellular matrix. Its function is as follows. Type I collagen is a member of group I collagen (fibrillar forming collagen). The chain is Collagen alpha-1(I) chain from Macrauchenia sp.